Here is a 412-residue protein sequence, read N- to C-terminus: Potassium channel, subfamily K, member 13 (412 aa).

Residues 1-21 (MACRSGCCCNSIGSFNEDNAR) are Cytoplasmic-facing. Residues 22 to 42 (FLMLALLIIIYLLCGAAVFSA) traverse the membrane as a helical segment. The pore-forming intramembrane region spans 97-117 (WDFAGAFYFVGTVVSTIGFGM). Thr-112, Ile-113, and Gly-114 together coordinate K(+). Residues 112–117 (TIGFGM) form a selectivity filter 1 region. The chain crosses the membrane as a helical span at residues 127–147 (IFLIFYGLIGCAATILFFNLF). Over 148 to 198 (LERVITVIAFVLKFCHERRESRKAGPTQNCRRPSTDNRDRRTDSLAGWKPS) the chain is Cytoplasmic. A helical membrane pass occupies residues 199-219 (VYCVMLILGVAAILVSCCASA). Residues 229–249 (YLDALYFCFVAFSTIGFGDMV) constitute an intramembrane region (pore-forming). Residues Thr-242, Ile-243, Gly-244, and Phe-245 each contribute to the K(+) site. Residues 242–247 (TIGFGD) form a selectivity filter 2 region. A helical transmembrane segment spans residues 268-288 (LFILTGVCCIYSLFNVISIVI). Residues 289–412 (KQVLNWLLRR…NRLAETSVDR (124 aa)) lie on the Cytoplasmic side of the membrane. The span at 374-386 (MANGHPRQSGSSS) shows a compositional bias: polar residues. The interval 374 to 395 (MANGHPRQSGSSSRHNEFSGGV) is disordered.

Belongs to the two pore domain potassium channel (TC 1.A.1.8) family. As to quaternary structure, homodimer. Heterodimer. Brain and heart.

Its subcellular location is the cell membrane. It catalyses the reaction K(+)(in) = K(+)(out). With respect to regulation, the channel conductance is activated by arachidonic acid and inhibited by Ba(2+) ions, volatile anesthetics such as halothane and antiarrhythmic drug mexiletine. Insensitive to extracellular pH change. Its function is as follows. K(+) channel that conducts outward rectifying tonic currents potentiated by purinergic signals. Homo- and heterodimerizes to form functional channels with distinct regulatory and gating properties. Contributes most of K(+) currents at the plasma membrane of resting microglia. Maintains a depolarized membrane potential required for proper ramified microglia morphology and phagocytosis, selectively mediating microglial pruning of presynaptic compartments at hippocampal excitatory synapses. Upon local release of ATP caused by neuronal injury or infection, it is potentiated by purinergic signaling and contributes to ATP-triggered K(+) efflux underlying microglial NLRP3 inflammasome assembly and IL1B release. In Danio rerio (Zebrafish), this protein is Potassium channel, subfamily K, member 13.